Reading from the N-terminus, the 585-residue chain is MNIFADFDARIKKTLQDIDLKPKDGGELDLSRIGVEPPRDASHGDIATNAAMVLSKAVGQNPRELAARIAEALKADEDVESVDVAGPGFINLRLKASYWQRELLVMLNEGTDFGRSRLGAGKKVNVEYVSANPTGPMHVGHCRGAVVGDVLANLLKFAGYDVVKEYYINDAGAQIDVLARSVMLRYREALGESIGEIPAGLYPGDYLVRVGQELAGEFGTKLLEMPEAEALAIVKDRTIDAMMAMIRADLDALNVHHDVFYSERKLHVDHARAIRNAINDLTLKGHVYKGKLPPPKGQLPEDWEDREQTLFRSTEVGDDIDRPLMKSDGSFTYFAGDVAYFKDKYDHGFNEMIYVLGADHGGYVKRLEAVARAVSDGKAKLTVLLCQLVKLFRNGEPVRMSKRAGEFITLRDVVDEVGRDPVRFMMLYRKNDAPLDFDFAKVTEQSKDNPVFYVQYASARCHSVFRQAADQLGLVDLDRVAMGSHFEKLTDESEIALVRKLAEYPRLIESAAIHQEPHRLAFYLYDLASSFHSQWNRGAENPDLRFIKVNDPDLSLARLGLVQVVSDVLTSGLTIIGADAPTEMR.

A 'HIGH' region motif is present at residues 131-141 (ANPTGPMHVGH).

The protein belongs to the class-I aminoacyl-tRNA synthetase family. As to quaternary structure, monomer.

It localises to the cytoplasm. The catalysed reaction is tRNA(Arg) + L-arginine + ATP = L-arginyl-tRNA(Arg) + AMP + diphosphate. The polypeptide is Arginine--tRNA ligase (Brucella melitensis biotype 1 (strain ATCC 23456 / CCUG 17765 / NCTC 10094 / 16M)).